A 220-amino-acid polypeptide reads, in one-letter code: Charged multivesicular body protein 4b (220 aa).

2 disordered regions span residues 1–22 (MSLF…SPQE) and 180–220 (EIGD…WAAN). Coiled-coil stretches lie at residues 21–88 (QEAI…STIE) and 123–181 (IDKV…LLEI).

This sequence belongs to the SNF7 family. In terms of assembly, probable core component of the endosomal sorting required for transport complex III (ESCRT-III). ESCRT-III components are thought to multimerize to form a flat lattice on the perimeter membrane of the endosome.

Its subcellular location is the cytoplasm. It is found in the cytosol. The protein localises to the late endosome membrane. It localises to the midbody. In terms of biological role, probable core component of the endosomal sorting required for transport complex III (ESCRT-III) which is involved in multivesicular bodies (MVBs) formation and sorting of endosomal cargo proteins into MVBs. MVBs contain intraluminal vesicles (ILVs) that are generated by invagination and scission from the limiting membrane of the endosome and mostly are delivered to lysosomes enabling degradation of membrane proteins, such as stimulated growth factor receptors, lysosomal enzymes and lipids. The protein is Charged multivesicular body protein 4b (chmp4b) of Danio rerio (Zebrafish).